A 417-amino-acid chain; its full sequence is UDP-N-acetylglucosamine 1-carboxyvinyltransferase (417 aa).

Residue 22-23 (KN) coordinates phosphoenolpyruvate. Residue Arg-94 participates in UDP-N-acetyl-alpha-D-glucosamine binding. Catalysis depends on Cys-118, which acts as the Proton donor. Cys-118 is subject to 2-(S-cysteinyl)pyruvic acid O-phosphothioketal. UDP-N-acetyl-alpha-D-glucosamine is bound by residues 123-127 (RPIDQ), Asp-306, and Ile-328.

The protein belongs to the EPSP synthase family. MurA subfamily.

The protein localises to the cytoplasm. The enzyme catalyses phosphoenolpyruvate + UDP-N-acetyl-alpha-D-glucosamine = UDP-N-acetyl-3-O-(1-carboxyvinyl)-alpha-D-glucosamine + phosphate. It participates in cell wall biogenesis; peptidoglycan biosynthesis. Cell wall formation. Adds enolpyruvyl to UDP-N-acetylglucosamine. The protein is UDP-N-acetylglucosamine 1-carboxyvinyltransferase of Clostridium botulinum (strain ATCC 19397 / Type A).